The following is a 336-amino-acid chain: Anthranilate phosphoribosyltransferase (336 aa).

5-phospho-alpha-D-ribose 1-diphosphate is bound by residues Gly-79, 82-83, Thr-87, 89-92, 107-115, and Ser-119; these read GD, NIST, and KHGNRAMSS. Residue Gly-79 participates in anthranilate binding. Ser-91 contributes to the Mg(2+) binding site. Asn-110 is a binding site for anthranilate. Arg-165 contributes to the anthranilate binding site. 2 residues coordinate Mg(2+): Asp-225 and Glu-226.

Belongs to the anthranilate phosphoribosyltransferase family. As to quaternary structure, homodimer. It depends on Mg(2+) as a cofactor.

The catalysed reaction is N-(5-phospho-beta-D-ribosyl)anthranilate + diphosphate = 5-phospho-alpha-D-ribose 1-diphosphate + anthranilate. It participates in amino-acid biosynthesis; L-tryptophan biosynthesis; L-tryptophan from chorismate: step 2/5. Its function is as follows. Catalyzes the transfer of the phosphoribosyl group of 5-phosphorylribose-1-pyrophosphate (PRPP) to anthranilate to yield N-(5'-phosphoribosyl)-anthranilate (PRA). The polypeptide is Anthranilate phosphoribosyltransferase (Dictyoglomus turgidum (strain DSM 6724 / Z-1310)).